Here is a 368-residue protein sequence, read N- to C-terminus: 3-dehydroquinate synthase (368 aa).

NAD(+) is bound by residues D69–K74, G103–D107, T127–T128, K140, and K149. E182, H245, and H262 together coordinate Zn(2+).

Belongs to the sugar phosphate cyclases superfamily. Dehydroquinate synthase family. Co(2+) serves as cofactor. Zn(2+) is required as a cofactor. The cofactor is NAD(+).

Its subcellular location is the cytoplasm. The catalysed reaction is 7-phospho-2-dehydro-3-deoxy-D-arabino-heptonate = 3-dehydroquinate + phosphate. It functions in the pathway metabolic intermediate biosynthesis; chorismate biosynthesis; chorismate from D-erythrose 4-phosphate and phosphoenolpyruvate: step 2/7. In terms of biological role, catalyzes the conversion of 3-deoxy-D-arabino-heptulosonate 7-phosphate (DAHP) to dehydroquinate (DHQ). The chain is 3-dehydroquinate synthase from Pseudomonas aeruginosa (strain LESB58).